The sequence spans 424 residues: MSVEAQSRSGAVDTQEPADLREQVHSAARRARVAARTLATLSAEAKNRALHAAADSVLANVDAVLAANAADVDAARQGGTPEAMIDRLALNPQRVDGIAAGLRQVAALPDPVGEVLRGKTLPNGLQLRQQRVPLGVVGMVYEGRPNVTVDAFGLTLKSGNAALLRGSSSAARSNQALVDALRSALAEEGLPLDAVQLLPSQDRASVTHLIQARGLVDVVIPRGGAGLIDAVVRDAQVPTIETGVGNCHVYVHSSADIDMAEKILLNAKTRRPSVCNAAETLLVDRALTDTALPRLVKALQDAGVTVHADPTEDELRAEFLSMDIALAVVDGLDAAIDHINTYGTGHTEAIVTTDLAAAQRFTERVDAAAVMVNASTSFTDGEQFGFGAEIGISTQKLHARGPMGLPELTSTKWIVWGDGQIRPA.

The interval 1-27 (MSVEAQSRSGAVDTQEPADLREQVHSA) is disordered.

This sequence belongs to the gamma-glutamyl phosphate reductase family.

It localises to the cytoplasm. The enzyme catalyses L-glutamate 5-semialdehyde + phosphate + NADP(+) = L-glutamyl 5-phosphate + NADPH + H(+). It participates in amino-acid biosynthesis; L-proline biosynthesis; L-glutamate 5-semialdehyde from L-glutamate: step 2/2. Functionally, catalyzes the NADPH-dependent reduction of L-glutamate 5-phosphate into L-glutamate 5-semialdehyde and phosphate. The product spontaneously undergoes cyclization to form 1-pyrroline-5-carboxylate. This Mycolicibacterium smegmatis (strain ATCC 700084 / mc(2)155) (Mycobacterium smegmatis) protein is Gamma-glutamyl phosphate reductase.